A 199-amino-acid polypeptide reads, in one-letter code: MARCKS-related protein (199 aa).

The segment at 1–199 is disordered; that stretch reads MGSQSSKAPR…PTPAGAEQNE (199 aa). Residue Gly-2 is the site of N-myristoyl glycine attachment. Thr-14 bears the Phosphothreonine mark. Over residues 16-26 the composition is skewed to low complexity; the sequence is EEAAGASPAKA. 3 positions are modified to phosphoserine: Ser-22, Ser-36, and Ser-48. Low complexity predominate over residues 53–64; sequence GTDEAAGATGDA. At Ser-71 the chain carries Phosphoserine. A compositionally biased stretch (basic and acidic residues) spans 76 to 85; sequence AKGDAPPKET. Phosphothreonine is present on Thr-85. Residues 86–98 show a composition bias toward basic residues; sequence PKKKKKFSFKKPF. Residues 87–110 form an effector domain involved in lipid-binding and calmodulin-binding region; it reads KKKKKFSFKKPFKLSGLSFKRNRK. Residues Ser-93, Ser-101, and Ser-104 each carry the phosphoserine; by PKC modification. Residue Ser-119 is modified to Phosphoserine. Position 120 is a phosphoserine; by MAPK8 (Ser-120). Ser-135 bears the Phosphoserine mark. Thr-148 carries the post-translational modification Phosphothreonine; by MAPK8. A Phosphoserine modification is found at Ser-151. A compositionally biased stretch (low complexity) spans 156–167; the sequence is AKGAEAGAACKG. Thr-170 is subject to Phosphothreonine. Residues 181 to 199 are compositionally biased toward low complexity; the sequence is STPSGPESGPTPAGAEQNE. Thr-182 bears the Phosphothreonine; by MAPK8 mark. Position 191 is a phosphothreonine (Thr-191).

It belongs to the MARCKS family. As to quaternary structure, binds to filamentous actin (F-actin), but not to monomeric G-actin, independently of its phosphorylation status. Interacts with calmodulin. Phosphorylated. Phosphorylation at Ser-120 and Thr-182 is non-redundantly catalyzed by MAPK8 in vivo. Phosphorylation at Thr-148 is preferentially catalyzed by MAPK8 in vivo, but this modification can also be catalyzed by other kinases in the absence of MAPK8. May be phosphorylated by protein kinase C, which disrupts the interaction with calmodulin.

It localises to the cytoplasm. Its subcellular location is the cytoskeleton. It is found in the cell membrane. Controls cell movement by regulating actin cytoskeleton homeostasis and filopodium and lamellipodium formation. When unphosphorylated, induces cell migration. When phosphorylated by MAPK8, induces actin bundles formation and stabilization, thereby reducing actin plasticity, hence restricting cell movement, including neuronal migration. May be involved in coupling the protein kinase C and calmodulin signal transduction systems. This Oryctolagus cuniculus (Rabbit) protein is MARCKS-related protein (MARCKSL1).